Reading from the N-terminus, the 905-residue chain is Protein translocase subunit SecA (905 aa).

Residues Gln86, 104–108, and Asp499 contribute to the ATP site; that span reads GEGKT. 4 residues coordinate Zn(2+): Cys890, Cys892, Cys901, and His902.

Belongs to the SecA family. Monomer and homodimer. Part of the essential Sec protein translocation apparatus which comprises SecA, SecYEG and auxiliary proteins SecDF-YajC and YidC. It depends on Zn(2+) as a cofactor.

The protein resides in the cell inner membrane. It is found in the cytoplasm. It carries out the reaction ATP + H2O + cellular proteinSide 1 = ADP + phosphate + cellular proteinSide 2.. Part of the Sec protein translocase complex. Interacts with the SecYEG preprotein conducting channel. Has a central role in coupling the hydrolysis of ATP to the transfer of proteins into and across the cell membrane, serving both as a receptor for the preprotein-SecB complex and as an ATP-driven molecular motor driving the stepwise translocation of polypeptide chains across the membrane. This chain is Protein translocase subunit SecA, found in Rickettsia typhi (strain ATCC VR-144 / Wilmington).